The primary structure comprises 415 residues: Glutamate-1-semialdehyde 2,1-aminomutase (415 aa).

Residue lysine 260 is modified to N6-(pyridoxal phosphate)lysine.

This sequence belongs to the class-III pyridoxal-phosphate-dependent aminotransferase family. HemL subfamily. Pyridoxal 5'-phosphate serves as cofactor.

It is found in the cytoplasm. It catalyses the reaction (S)-4-amino-5-oxopentanoate = 5-aminolevulinate. It functions in the pathway porphyrin-containing compound metabolism; protoporphyrin-IX biosynthesis; 5-aminolevulinate from L-glutamyl-tRNA(Glu): step 2/2. The protein is Glutamate-1-semialdehyde 2,1-aminomutase of Methanoculleus marisnigri (strain ATCC 35101 / DSM 1498 / JR1).